The primary structure comprises 165 residues: Phosphopantetheine adenylyltransferase (165 aa).

Residue Thr10 participates in substrate binding. Residues 10–11 and His18 contribute to the ATP site; that span reads TF. Substrate-binding residues include Lys42, Leu74, and Arg88. ATP contacts are provided by residues 89-91, Glu99, and 124-130; these read GLR and NAFISSS.

Belongs to the bacterial CoaD family. As to quaternary structure, homohexamer. Mg(2+) is required as a cofactor.

It is found in the cytoplasm. It catalyses the reaction (R)-4'-phosphopantetheine + ATP + H(+) = 3'-dephospho-CoA + diphosphate. It participates in cofactor biosynthesis; coenzyme A biosynthesis; CoA from (R)-pantothenate: step 4/5. Functionally, reversibly transfers an adenylyl group from ATP to 4'-phosphopantetheine, yielding dephospho-CoA (dPCoA) and pyrophosphate. In Helicobacter hepaticus (strain ATCC 51449 / 3B1), this protein is Phosphopantetheine adenylyltransferase.